A 156-amino-acid chain; its full sequence is Ribonuclease pancreatic (156 aa).

Residues 1-28 (MALEKSLVLLPLLVLILLVLGWVQPSLG) form the signal peptide. Positions 33–43 (AKKFQRQHVDS) are enriched in basic and acidic residues. The tract at residues 33–53 (AKKFQRQHVDSDSSPSSSSTY) is disordered. K35 and R38 together coordinate substrate. The active-site Proton acceptor is H40. 4 cysteine pairs are disulfide-bonded: C54/C112, C68/C123, C86/C138, and C93/C100. The N-linked (GlcNAc...) asparagine glycan is linked to N62. Substrate is bound by residues 69–73 (KPVNT) and K94. N104 is a glycosylation site (N-linked (GlcNAc...) asparagine). R113 contacts substrate. A glycan (N-linked (GlcNAc...) asparagine) is linked at N116. H147 (proton donor) is an active-site residue.

It belongs to the pancreatic ribonuclease family. In terms of assembly, monomer. Interacts with and forms tight 1:1 complexes with RNH1. Dimerization of two such complexes may occur. Interaction with RNH1 inhibits this protein. In terms of tissue distribution, pancreas and other tissues and body fluids (indicating it may have other physiological functions besides its role in digestion).

Its subcellular location is the secreted. The enzyme catalyses an [RNA] containing cytidine + H2O = an [RNA]-3'-cytidine-3'-phosphate + a 5'-hydroxy-ribonucleotide-3'-[RNA].. The catalysed reaction is an [RNA] containing uridine + H2O = an [RNA]-3'-uridine-3'-phosphate + a 5'-hydroxy-ribonucleotide-3'-[RNA].. In terms of biological role, endonuclease that catalyzes the cleavage of RNA on the 3' side of pyrimidine nucleotides. Acts on single-stranded and double-stranded RNA. In Pan troglodytes (Chimpanzee), this protein is Ribonuclease pancreatic (RNASE1).